We begin with the raw amino-acid sequence, 231 residues long: Axial regulator YABBY 4 (231 aa).

The segment at 26 to 53 adopts a C4-type zinc-finger fold; the sequence is CGFCTTILLVSVPFTSLSMVVTVRCGHC. Disordered stretches follow at residues 98 to 120 and 211 to 231; these read KVNQ…EDED and NNGF…SPFE.

The protein belongs to the YABBY family. In terms of assembly, interacts with SPL/NZZ.

It is found in the nucleus. Functionally, essential for the formation and the abaxial-adaxial asymmetric growth of the ovule outer integument. The chain is Axial regulator YABBY 4 (YAB4) from Arabidopsis thaliana (Mouse-ear cress).